The chain runs to 78 residues: Translation initiation factor IF-1, chloroplastic (78 aa).

An S1-like domain is found at 1-73 (MASNRELIEM…TKGRIIYRLR (73 aa)).

The protein belongs to the IF-1 family. As to quaternary structure, component of the 30S ribosomal translation pre-initiation complex which assembles on the 30S ribosome in the order IF-2 and IF-3, IF-1 and N-formylmethionyl-tRNA(fMet); mRNA recruitment can occur at any time during PIC assembly.

The protein localises to the plastid. Its subcellular location is the chloroplast. Its function is as follows. One of the essential components for the initiation of protein synthesis. Stabilizes the binding of IF-2 and IF-3 on the 30S subunit to which N-formylmethionyl-tRNA(fMet) subsequently binds. Helps modulate mRNA selection, yielding the 30S pre-initiation complex (PIC). Upon addition of the 50S ribosomal subunit IF-1, IF-2 and IF-3 are released leaving the mature 70S translation initiation complex. The chain is Translation initiation factor IF-1, chloroplastic from Ostreococcus tauri.